The primary structure comprises 394 residues: Flavohemoprotein (394 aa).

Residues 1 to 136 (MLSENTINIV…LANVFIQREE (136 aa)) enclose the Globin domain. Position 85 (His-85) interacts with heme b. Active-site charge relay system residues include Tyr-95 and Glu-135. The tract at residues 147–394 (GGWRGLREFE…YECFGPHKVV (248 aa)) is reductase. In terms of domain architecture, FAD-binding FR-type spans 150-255 (RGLREFELVE…AAPAGDFFLD (106 aa)). Residues Tyr-188 and 204 to 207 (RQYS) each bind FAD. 268-273 (GVGLTP) contributes to the NADP(+) binding site. 387–390 (CFGP) is an FAD binding site.

Belongs to the globin family. Two-domain flavohemoproteins subfamily. The protein in the C-terminal section; belongs to the flavoprotein pyridine nucleotide cytochrome reductase family. Requires heme b as cofactor. FAD serves as cofactor.

It catalyses the reaction 2 nitric oxide + NADPH + 2 O2 = 2 nitrate + NADP(+) + H(+). The enzyme catalyses 2 nitric oxide + NADH + 2 O2 = 2 nitrate + NAD(+) + H(+). Is involved in NO detoxification in an aerobic process, termed nitric oxide dioxygenase (NOD) reaction that utilizes O(2) and NAD(P)H to convert NO to nitrate, which protects the bacterium from various noxious nitrogen compounds. Therefore, plays a central role in the inducible response to nitrosative stress. This chain is Flavohemoprotein, found in Vibrio vulnificus (strain CMCP6).